The chain runs to 1942 residues: Myosin-2 (1942 aa).

Residues 33-82 (DAKTSVFVAEPKESFVKGTIQSKDAGKVTVKTEAGATLTVKEDQIFPMNP) form the Myosin N-terminal SH3-like domain. 2 positions are modified to phosphothreonine: Thr-64 and Thr-69. Residues 86–785 (DKIEDMAMMT…LLGLLEEMRD (700 aa)) enclose the Myosin motor domain. 179 to 186 (GESGAGKT) contributes to the ATP binding site. Tyr-389 is subject to Phosphotyrosine. Thr-419 is modified (phosphothreonine). Residue Ser-625 is modified to Phosphoserine. The tract at residues 662–684 (LNKLMTNLRSTHPHFVRCIIPNE) is actin-binding. At His-760 the chain carries Pros-methylhistidine. An IQ domain is found at 788–817 (LAQLITRTQAMCRGFLARVEYQKMVERRES). Residues 849 to 1930 (SAETEKEMAT…ESQVNKLRVK (1082 aa)) adopt a coiled-coil conformation. Phosphoserine is present on residues Ser-1095 and Ser-1099. Positions 1130 to 1175 (EAERASRAKAEKQRSDLSRELEEISERLEEAGGATSAQIEMNKKRE) are disordered. A compositionally biased stretch (basic and acidic residues) spans 1131 to 1159 (AERASRAKAEKQRSDLSRELEEISERLEE). Ser-1165 and Ser-1240 each carry phosphoserine. The residue at position 1244 (Thr-1244) is a Phosphothreonine. Phosphoserine is present on Ser-1246. A Phosphothreonine modification is found at Thr-1258. Phosphoserine is present on Ser-1264. A Phosphothreonine modification is found at Thr-1289. Residues Ser-1291, Ser-1295, Ser-1306, and Ser-1309 each carry the phosphoserine modification. Residue Tyr-1467 is modified to Phosphotyrosine. At Thr-1470 the chain carries Phosphothreonine. Position 1477 is a phosphoserine (Ser-1477). Tyr-1495 carries the post-translational modification Phosphotyrosine. Ser-1498 carries the post-translational modification Phosphoserine. Thr-1504 carries the phosphothreonine modification. A Phosphoserine modification is found at Ser-1517. A Phosphothreonine modification is found at Thr-1520. Ser-1557, Ser-1577, Ser-1603, Ser-1606, Ser-1717, and Ser-1729 each carry phosphoserine. A phosphothreonine mark is found at Thr-1733 and Thr-1739. The residue at position 1742 (Ser-1742) is a Phosphoserine.

The protein belongs to the TRAFAC class myosin-kinesin ATPase superfamily. Myosin family. In terms of assembly, muscle myosin is a hexameric protein that consists of 2 heavy chain subunits (MHC), 2 alkali light chain subunits (MLC) and 2 regulatory light chain subunits (MLC-2). Interacts with GCSAM. In terms of tissue distribution, expressed in type 2a myofibers in the tibialis anterior and soleus muscles (at protein level).

It localises to the cytoplasm. The protein localises to the myofibril. Myosins are actin-based motor molecules with ATPase activity essential for muscle contraction. In Mus musculus (Mouse), this protein is Myosin-2.